Here is a 727-residue protein sequence, read N- to C-terminus: Catalase-peroxidase (727 aa).

Residues 1-24 are disordered; that stretch reads MDQKSDSAGKCPVAHTAPRGRSNR. The segment at residues 95–217 is a cross-link (tryptophyl-tyrosyl-methioninium (Trp-Tyr) (with M-243)); sequence WHSAGTYRIT…LAAVQMGLIY (123 aa). Catalysis depends on His96, which acts as the Proton acceptor. The segment at residues 217 to 243 is a cross-link (tryptophyl-tyrosyl-methioninium (Tyr-Met) (with W-95)); that stretch reads YVNPEGPNGNPDPVAAARDIRETFARM. His258 contributes to the heme b binding site.

This sequence belongs to the peroxidase family. Peroxidase/catalase subfamily. As to quaternary structure, homodimer or homotetramer. It depends on heme b as a cofactor. Post-translationally, formation of the three residue Trp-Tyr-Met cross-link is important for the catalase, but not the peroxidase activity of the enzyme.

It carries out the reaction H2O2 + AH2 = A + 2 H2O. It catalyses the reaction 2 H2O2 = O2 + 2 H2O. In terms of biological role, bifunctional enzyme with both catalase and broad-spectrum peroxidase activity. The protein is Catalase-peroxidase of Rhizobium meliloti (strain 1021) (Ensifer meliloti).